A 591-amino-acid polypeptide reads, in one-letter code: DNA ligase (591 aa).

Residues 38 to 42, 87 to 88, and E119 contribute to the NAD(+) site; these read DEKYD and SL. The active-site N6-AMP-lysine intermediate is K121. NAD(+) is bound by residues R142, E181, K298, and K322. Zn(2+) contacts are provided by C415, C418, C433, and C439.

This sequence belongs to the NAD-dependent DNA ligase family. LigA subfamily. Requires Mg(2+) as cofactor. It depends on Mn(2+) as a cofactor.

It carries out the reaction NAD(+) + (deoxyribonucleotide)n-3'-hydroxyl + 5'-phospho-(deoxyribonucleotide)m = (deoxyribonucleotide)n+m + AMP + beta-nicotinamide D-nucleotide.. Its function is as follows. DNA ligase that catalyzes the formation of phosphodiester linkages between 5'-phosphoryl and 3'-hydroxyl groups in double-stranded DNA using NAD as a coenzyme and as the energy source for the reaction. It is essential for DNA replication and repair of damaged DNA. In Wigglesworthia glossinidia brevipalpis, this protein is DNA ligase.